The sequence spans 115 residues: Large ribosomal subunit protein P2x (115 aa).

The segment at 78–115 (GGGGGAASAAEPVAESKKKVEEVKDESSDDAGMMGLFD) is disordered. Basic and acidic residues predominate over residues 91-103 (AESKKKVEEVKDE). 2 positions are modified to phosphoserine: Ser104 and Ser105.

This sequence belongs to the eukaryotic ribosomal protein P1/P2 family. As to quaternary structure, P1 and P2 exist as dimers at the large ribosomal subunit.

Plays an important role in the elongation step of protein synthesis. The chain is Large ribosomal subunit protein P2x (RPP2C) from Arabidopsis thaliana (Mouse-ear cress).